Reading from the N-terminus, the 439-residue chain is Tol-Pal system protein TolB (439 aa).

A signal peptide spans 1–22 (MTKFPRWLAMLVGLLFPLSALT).

It belongs to the TolB family. In terms of assembly, the Tol-Pal system is composed of five core proteins: the inner membrane proteins TolA, TolQ and TolR, the periplasmic protein TolB and the outer membrane protein Pal. They form a network linking the inner and outer membranes and the peptidoglycan layer.

The protein resides in the periplasm. Functionally, part of the Tol-Pal system, which plays a role in outer membrane invagination during cell division and is important for maintaining outer membrane integrity. This Xylella fastidiosa (strain 9a5c) protein is Tol-Pal system protein TolB.